A 208-amino-acid chain; its full sequence is Uracil phosphoribosyltransferase (208 aa).

5-phospho-alpha-D-ribose 1-diphosphate is bound by residues Arg78, Arg103, and 130 to 138 (DPMLATGGS). Uracil contacts are provided by residues Ile193 and 198–200 (GDA). Residue Asp199 participates in 5-phospho-alpha-D-ribose 1-diphosphate binding.

The protein belongs to the UPRTase family. Mg(2+) serves as cofactor.

The catalysed reaction is UMP + diphosphate = 5-phospho-alpha-D-ribose 1-diphosphate + uracil. Its pathway is pyrimidine metabolism; UMP biosynthesis via salvage pathway; UMP from uracil: step 1/1. Its activity is regulated as follows. Allosterically activated by GTP. Catalyzes the conversion of uracil and 5-phospho-alpha-D-ribose 1-diphosphate (PRPP) to UMP and diphosphate. The chain is Uracil phosphoribosyltransferase from Shewanella woodyi (strain ATCC 51908 / MS32).